The chain runs to 387 residues: 8-amino-7-oxononanoate synthase (387 aa).

Arginine 19 is a substrate binding site. 106–107 (GY) provides a ligand contact to pyridoxal 5'-phosphate. A substrate-binding site is contributed by histidine 131. Pyridoxal 5'-phosphate-binding residues include serine 177, histidine 205, and threonine 236. Lysine 239 is modified (N6-(pyridoxal phosphate)lysine). Threonine 353 provides a ligand contact to substrate.

The protein belongs to the class-II pyridoxal-phosphate-dependent aminotransferase family. BioF subfamily. As to quaternary structure, homodimer. Requires pyridoxal 5'-phosphate as cofactor.

The catalysed reaction is 6-carboxyhexanoyl-[ACP] + L-alanine + H(+) = (8S)-8-amino-7-oxononanoate + holo-[ACP] + CO2. It participates in cofactor biosynthesis; biotin biosynthesis. In terms of biological role, catalyzes the decarboxylative condensation of pimeloyl-[acyl-carrier protein] and L-alanine to produce 8-amino-7-oxononanoate (AON), [acyl-carrier protein], and carbon dioxide. The protein is 8-amino-7-oxononanoate synthase of Nitrosomonas eutropha (strain DSM 101675 / C91 / Nm57).